The primary structure comprises 443 residues: Exodeoxyribonuclease 7 large subunit (443 aa).

Belongs to the XseA family. As to quaternary structure, heterooligomer composed of large and small subunits.

It is found in the cytoplasm. The enzyme catalyses Exonucleolytic cleavage in either 5'- to 3'- or 3'- to 5'-direction to yield nucleoside 5'-phosphates.. In terms of biological role, bidirectionally degrades single-stranded DNA into large acid-insoluble oligonucleotides, which are then degraded further into small acid-soluble oligonucleotides. This Vibrio vulnificus (strain YJ016) protein is Exodeoxyribonuclease 7 large subunit.